A 108-amino-acid polypeptide reads, in one-letter code: UPF0145 protein Acel_2109 (108 aa).

Belongs to the UPF0145 family.

This Acidothermus cellulolyticus (strain ATCC 43068 / DSM 8971 / 11B) protein is UPF0145 protein Acel_2109.